Here is a 316-residue protein sequence, read N- to C-terminus: Protein PXR1 (316 aa).

A G-patch domain is found at 25 to 71 (TSRFGHQYLERMGWKPGKGLGLVEHATTSHVKVSIKDDNLGLGSKLA). Residues 146–280 (GTTKKRKIDS…DSMLMPKEQL (135 aa)) form a disordered region. The segment covering 179–195 (DRKEKEEKKTEKENSEI) has biased composition (basic and acidic residues). A compositionally biased stretch (basic residues) spans 196 to 209 (KKKKKEKKEKKEKK). A compositionally biased stretch (basic and acidic residues) spans 210 to 240 (EKKDKNEKKEKKDKNEKKEKKDKNEEKEKKE). The segment covering 241–260 (KKEKKEKKDKKDKKDKKDKK) has biased composition (basic residues). The segment covering 261 to 270 (EKKEVKEVTR) has biased composition (basic and acidic residues).

This sequence belongs to the PINX1 family.

The protein resides in the nucleus. It localises to the nucleolus. In terms of biological role, involved in rRNA-processing at A0, A1 and A2 sites and negatively regulates telomerase. The protein is Protein PXR1 (PXR1) of Debaryomyces hansenii (strain ATCC 36239 / CBS 767 / BCRC 21394 / JCM 1990 / NBRC 0083 / IGC 2968) (Yeast).